A 302-amino-acid polypeptide reads, in one-letter code: Sulfate adenylyltransferase subunit 2 (302 aa).

The disordered stretch occupies residues 279–302 (ERQGRAIDHDQSGSMELKKRQGYF). Residues 280–302 (RQGRAIDHDQSGSMELKKRQGYF) are compositionally biased toward basic and acidic residues.

Belongs to the PAPS reductase family. CysD subfamily. In terms of assembly, heterodimer composed of CysD, the smaller subunit, and CysN.

It carries out the reaction sulfate + ATP + H(+) = adenosine 5'-phosphosulfate + diphosphate. It participates in sulfur metabolism; hydrogen sulfide biosynthesis; sulfite from sulfate: step 1/3. Its function is as follows. With CysN forms the ATP sulfurylase (ATPS) that catalyzes the adenylation of sulfate producing adenosine 5'-phosphosulfate (APS) and diphosphate, the first enzymatic step in sulfur assimilation pathway. APS synthesis involves the formation of a high-energy phosphoric-sulfuric acid anhydride bond driven by GTP hydrolysis by CysN coupled to ATP hydrolysis by CysD. This is Sulfate adenylyltransferase subunit 2 from Photobacterium profundum (strain SS9).